Reading from the N-terminus, the 421-residue chain is Solute carrier family 35 member F3 (421 aa).

Residues 25–45 (EGEERPRDSPGPAEAQAPAGV) form a disordered region. Transmembrane regions (helical) follow at residues 66–86 (IFWGVAVVLCVCSSWAGSTQL), 98–118 (FTLTWFATNWNFLFFPLYYVG), 149–169 (VFFTKAAPFGVLWTLTNYLYL), 179–199 (DVSVLFCCNKAFVFLLSWIVL), 208–228 (IVAAILAIAGIVMMTYADGFH), 232–252 (VIGIALVVASASMSALYKVLF), 266–286 (LFLSILGVFNILFITCIPIIL), 305–325 (LCGFSVLLLTFNIVLNFGIAV), 326–346 (TYPTLMSLGIVLSIPVNAVID), and 352–372 (IVFNGVRVIAIIIIGLGFLLL). Residues 393-421 (KKEEPAEGAADLSSGPQSKNRRARPSFAR) are disordered. Over residues 411–421 (KNRRARPSFAR) the composition is skewed to basic residues.

It belongs to the SLC35F solute transporter family. As to expression, expressed at the highest levels in the adult cerebellum.

The protein resides in the membrane. It catalyses the reaction thiamine(in) = thiamine(out). In terms of biological role, mediates thiamine transport. This is Solute carrier family 35 member F3 from Homo sapiens (Human).